The primary structure comprises 1134 residues: MDELAFGEAALEQTLAEMCELDTAVLNDIEDMLQLINNQDSDFPGLFDAPYAGGETGDTGPSSPGANSPESFSSASLASSLEAFLGGPKVTPAPLSPPPSAPAALKMYPSVSPFSPGPGIKEEPVPLTILQPAAPQPSPGTLLPPSFPAPPVQLSPAPVLGYSSLPSGFSGTLPGNTQQPPSSLPLAPAPGVLPTPALHTQVQSLASQQPLPASAAPRTNTVTSQVQQVPVVLQPHFIKADSLLLTAVKTDAGATVKTAGISTLAPGTAVQAGPLQTLVSGGTILATVPLVVDTDKLPIHRLAAGSKALGSAQSRGEKRTAHNAIEKRYRSSINDKIVELKDLVVGTEAKLNKSAVLRKAIDYIRFLQHSNQKLKQENLTLRSAHKSKSLKDLVSACGSGGGTDVSMEGMKPEVVETLTPPPSDAGSPSQSSPLSFGSRASSSGGSDSEPDSPAFEDSQVKAQRLPSHSRGMLDRSRLALCVLAFLCLTCNPLASLFGWGILTPSDATGTHRSSGRSMLEAESRDGSNWTQWLLPPLVWLANGLLVLACLALLFVYGEPVTRPHSGPAVHFWRHRKQADLDLARGDFPQAAQQLWLALQALGRPLPTSNLDLACSLLWNLIRHLLQRLWVGRWLAGQAGGLLRDRGLRKDARASARDAAVVYHKLHQLHAMGKYTGGHLAASNLALSALNLAECAGDAISMATLAEIYVAAALRVKTSLPRALHFLTRFFLSSARQACLAQSGSVPLAMQWLCHPVGHRFFVDGDWAVHGAPPESLYSVAGNPVDPLAQVTRLFREHLLERALNCIAQPSPGAADGDREFSDALGYLQLLNSCSDAAGAPACSFSVSSSMAATTGPDPVAKWWASLTAVVIHWLRRDEEAAERLYPLVEHIPQVLQDTERPLPRAALYSFKAARALLDHRKVESSPASLAICEKASGYLRDSLASTPTGSSIDKAMQLLLCDLLLVARTSLWQRQQSPASVQVAHGTSNGPQASALELRGFQHDLSSLRRLAQSFRPAMRRVFLHEATARLMAGASPARTHQLLDRSLRRRAGSSGKGGTTAELEPRPTWREHTEALLLASCYLPPAFLSAPGQRMSMLAEAARTVEKLGDHRLLLDCQQMLLRLGGGTTVTSS.

Positions 1–60 are transcriptional activation (acidic); it reads MDELAFGEAALEQTLAEMCELDTAVLNDIEDMLQLINNQDSDFPGLFDAPYAGGETGDTG. Over 1–477 the chain is Cytoplasmic; that stretch reads MDELAFGEAA…HSRGMLDRSR (477 aa). The 9aaTAD motif lies at 27–35; it reads NDIEDMLQL. The tract at residues 46–73 is disordered; the sequence is LFDAPYAGGETGDTGPSSPGANSPESFS. The segment covering 59–69 has biased composition (polar residues); that stretch reads TGPSSPGANSP. Phosphoserine is present on residues Ser-96 and Ser-115. Disordered regions lie at residues 130–149 and 170–195; these read LQPA…SFPA and SGTL…VLPT. Positions 170-179 are enriched in polar residues; sequence SGTLPGNTQQ. The segment at 227–487 is interaction with LMNA; that stretch reads QQVPVVLQPH…LALCVLAFLC (261 aa). The region spanning 317–367 is the bHLH domain; it reads EKRTAHNAIEKRYRSSINDKIVELKDLVVGTEAKLNKSAVLRKAIDYIRFL. Ser-331 and Ser-332 each carry phosphoserine; by SIK1. The leucine-zipper stretch occupies residues 367-388; it reads LQHSNQKLKQENLTLRSAHKSK. Phosphoserine; by AMPK is present on Ser-389. A Phosphoserine; by SIK1 modification is found at Ser-395. The segment at 415–468 is disordered; sequence VETLTPPPSDAGSPSQSSPLSFGSRASSSGGSDSEPDSPAFEDSQVKAQRLPSH. The segment covering 424-453 has biased composition (low complexity); that stretch reads DAGSPSQSSPLSFGSRASSSGGSDSEPDSP. Position 448 is a phosphoserine (Ser-448). A helical membrane pass occupies residues 478 to 498; sequence LALCVLAFLCLTCNPLASLFG. Over 499–536 the chain is Lumenal; that stretch reads WGILTPSDATGTHRSSGRSMLEAESRDGSNWTQWLLPP. A helical membrane pass occupies residues 537 to 557; sequence LVWLANGLLVLACLALLFVYG. Residues 558–1134 are Cytoplasmic-facing; it reads EPVTRPHSGP…LGGGTTVTSS (577 aa). Phosphoserine is present on Ser-1047.

The protein belongs to the SREBP family. In terms of assembly, forms a tight complex with SCAP, the SCAP-SREBP complex, in the endoplasmic reticulum membrane and the Golgi apparatus. Interacts with PAQR3; the interaction anchors the SCAP-SREBP complex to the Golgi apparatus in low cholesterol conditions. As to quaternary structure, efficient DNA binding of the soluble transcription factor fragment requires dimerization with another bHLH protein. Interacts with CEBPA, the interaction produces a transcriptional synergy. Interacts with LMNA. Post-translationally, processed in the Golgi apparatus, releasing the protein from the membrane. At low cholesterol the SCAP-SREBP complex is recruited into COPII vesicles for export from the endoplasmic reticulum. In the Golgi, complex SREBPs are cleaved sequentially by site-1 (MBTPS1, S1P) and site-2 (MBTPS2, S2P) proteases. The first cleavage by site-1 protease occurs within the luminal loop, the second cleavage by site-2 protease occurs within the first transmembrane domain, releasing the transcription factor from the Golgi membrane. Phosphorylated by AMPK, leading to suppress protein processing and nuclear translocation, and repress target gene expression. Phosphorylation at Ser-389 by SIK1 represses activity possibly by inhibiting DNA-binding. In terms of processing, SCAP-free SREBF1 is ubiquitinated by the BCR(ARMC5) complex, leading to its degradation. Post-translationally, ubiquitinated; the nuclear form has a rapid turnover and is rapidly ubiquitinated and degraded by the proteasome in the nucleus. In terms of tissue distribution, predominant isoform expressed in most tissues. Predominates in liver, adrenal gland, brain and adipose tissue. Also found in kidney, thymus, testis, muscle, jejunum, and ileum. As to expression, expressed only in select tissues, such as intestinal epithelial, heart, macrophage and bone marrow dendritic cells. Also found in kidney, thymus, testis, muscle, jejunum, and ileum.

The protein localises to the endoplasmic reticulum membrane. It is found in the golgi apparatus membrane. Its subcellular location is the cytoplasmic vesicle. It localises to the COPII-coated vesicle membrane. The protein resides in the nucleus. With respect to regulation, activation by cleavage is down-regulated upon activation of SIRT3-dependent PRKAA1/AMPK-alpha signaling cascade which leads to inhibition of ATP-consuming lipogenesis to restore cellular energy balance. Functionally, precursor of the transcription factor form (Processed sterol regulatory element-binding protein 1), which is embedded in the endoplasmic reticulum membrane. Low sterol concentrations promote processing of this form, releasing the transcription factor form that translocates into the nucleus and activates transcription of genes involved in cholesterol biosynthesis and lipid homeostasis. In terms of biological role, key transcription factor that regulates expression of genes involved in cholesterol biosynthesis and lipid homeostasis. Binds to the sterol regulatory element 1 (SRE-1) (5'-ATCACCCCAC-3'). Has dual sequence specificity binding to both an E-box motif (5'-ATCACGTGA-3') and to SRE-1 (5'-ATCACCCCAC-3'). Regulates the promoters of genes involved in cholesterol biosynthesis and the LDL receptor (LDLR) pathway of sterol regulation. Isoform expressed only in select tissues, which has higher transcriptional activity compared to SREBP-1C. Able to stimulate both lipogenic and cholesterogenic gene expression. Has a role in the nutritional regulation of fatty acids and triglycerides in lipogenic organs such as the liver. Required for innate immune response in macrophages by regulating lipid metabolism. Its function is as follows. Predominant isoform expressed in most tissues, which has weaker transcriptional activity compared to isoform SREBP-1A. Primarily controls expression of lipogenic gene. Strongly activates global lipid synthesis in rapidly growing cells. The sequence is that of Sterol regulatory element-binding protein 1 from Mus musculus (Mouse).